A 625-amino-acid polypeptide reads, in one-letter code: MAIFPRLENYSEVAIDTETTGLDWFRNDKPFGVAIALPNGYSEYYDIRKDLAAYQWLRDSVHKIRRAVNHNMKFDIHMLRKIDVHVNTRTAECTQIRAALINEHLMSYSLDSLAKKYLKAEKVDDIYEELAKLFGGPATRKAQAPNFHRAPESMMRRYAKVDAELALQLWQWQEEEIARQDLHEVWRLEMRLQPHVIESERVGIRVDEELAHKRIGDLTKIVDQTRKEINRLAGFEVNPNPSGSIKRLFEPYKEGDQWYAKDGTPIGTTDAGQPSLGADALKAIKHPAAGLILKCRKMIKTRDTFISGHVLGNIVDGYVHPNINQTKGETGGDDSGTEGTGTGRLSYTRPALQQIPSRDKEVAALVRPIFLPDEGQQWTYGDLDQHEFRIFAHYANPKSLIDAYTENPDLDMHQIVADMTGMPRSAPASGGANAKQINLAMVFNMGGGELASQMSLPYTWETATFKGESEARRFKKAGEEALAVMEKYYRAIPGVREVARQASSLAKSRGYVKTMYGRKIRFPGGMFTYKASGLVYQGTAADFNKRNICEIAEYIESECPHYRFLLNIHDEYSMSMVDEGDITVRHLKEMKRLVENKGLRVPIRIDFGGLAPNWWEATKMDAVTK.

Residues 324–345 form a disordered region; that stretch reads NQTKGETGGDDSGTEGTGTGRL.

This sequence belongs to the DNA polymerase type-A family. DpoZ subfamily.

It carries out the reaction DNA(n) + a 2'-deoxyribonucleoside 5'-triphosphate = DNA(n+1) + diphosphate. The catalysed reaction is dZTP + DNA(n) = DNA(n)-Z + diphosphate. DNA polymerase that preferentially incorporates the non-canonical base aminoadenine/dZTP instead of adenine into the synthesized DNA. More efficient in using dZTP instead of dATP as a substrate. In addition to this preference for dZTP, the phage also encodes a dATP triphosphohydrolase that removes dATP and its precursor dADP from the nucleotide pool of the host. This is DNA polymerase DpoZ (dpoZ) from Salmonella enterica (Salmonella choleraesuis).